A 472-amino-acid polypeptide reads, in one-letter code: Lycopene beta cyclase, chloroplastic (472 aa).

The N-terminal 25 residues, 1-25 (MDALLTSPFIPLKKPSHNRKSNTTT), are a transit peptide targeting the chloroplast. The tract at residues 1–27 (MDALLTSPFIPLKKPSHNRKSNTTTAS) is disordered. Residue 62–90 (LAVVGGGPAGLAVAKRVSDAGLSVCSIDP) participates in NAD(+) binding.

The protein belongs to the lycopene cyclase family. In terms of tissue distribution, expressed in flower buds and lips. Detected in roots and leaves.

It localises to the plastid. The protein localises to the chloroplast. The enzyme catalyses a carotenoid psi-end group = a carotenoid beta-end derivative. It functions in the pathway carotenoid biosynthesis; beta-carotene biosynthesis. Its pathway is carotenoid biosynthesis; beta-zeacarotene biosynthesis. Functionally, catalyzes the double cyclization reaction which converts lycopene to beta-carotene and neurosporene to beta-zeacarotene. The sequence is that of Lycopene beta cyclase, chloroplastic (LCY-B) from Oncidium hybrid cultivar (Orchid).